Consider the following 390-residue polypeptide: RNA binding protein fox-1 homolog 2 (390 aa).

The segment at 1 to 127 is disordered; it reads MQNEPLTPGY…STPKRLHVSN (127 aa). Polar residues-rich tracts occupy residues 18 to 28 and 65 to 95; these read SQGNQEPTTTP and GEHNLTLYGSTQAHGEQSSNSPSTQNGSLTT. Residue His-67 is modified to Phosphothreonine. Over residues 97 to 117 the composition is skewed to low complexity; it reads GGAQTDGQQSQTQSSENSESK. Residues 121-197 enclose the RRM domain; it reads KRLHVSNIPF…RKIEVNNATA (77 aa). Omega-N-methylarginine occurs at positions 249, 267, 268, 277, and 281. An asymmetric dimethylarginine mark is found at Arg-297 and Arg-329. Arg-381 and Arg-386 each carry asymmetric dimethylarginine; alternate. Residues Arg-381 and Arg-386 each carry the omega-N-methylarginine; alternate modification.

In terms of assembly, interacts with ER-alpha N-terminal activation domain. Interacts with RBPMS; the interaction allows cooperative assembly of stable cell-specific alternative splicing regulatory complexes.

Its subcellular location is the nucleus. It localises to the cytoplasm. RNA-binding protein that regulates alternative splicing events by binding to 5'-UGCAUGU-3' elements. Prevents binding of U2AF2 to the 3'-splice site. Regulates alternative splicing of tissue-specific exons and of differentially spliced exons during erythropoiesis. RNA-binding protein that seems to act as a coregulatory factor of ER-alpha. Together with RNA binding proteins RBPMS and MBNL1/2, activates vascular smooth muscle cells alternative splicing events. In Homo sapiens (Human), this protein is RNA binding protein fox-1 homolog 2 (RBFOX2).